The primary structure comprises 146 residues: Hemoglobin subunit beta (146 aa).

Val1 carries the N-acetylvaline modification. Positions 2–146 constitute a Globin domain; the sequence is HLTAEEKDAV…VANALAHRYH (145 aa). Ser44 carries the phosphoserine modification. Lys59 bears the N6-acetyllysine mark. A heme b-binding site is contributed by His63. Lys82 carries the N6-acetyllysine modification. His92 contacts heme b. Residue Cys93 is modified to S-nitrosocysteine.

This sequence belongs to the globin family. Heterotetramer of two alpha chains and two beta chains. Red blood cells.

In terms of biological role, involved in oxygen transport from the lung to the various peripheral tissues. This chain is Hemoglobin subunit beta (HBB), found in Hippopotamus amphibius (Hippopotamus).